Reading from the N-terminus, the 265-residue chain is Glutamate racemase (265 aa).

Residues 12–13 and 44–45 contribute to the substrate site; these read DS and YG. C75 (proton donor/acceptor) is an active-site residue. A substrate-binding site is contributed by 76-77; it reads NT. The active-site Proton donor/acceptor is C186. 187–188 serves as a coordination point for substrate; it reads TH.

It belongs to the aspartate/glutamate racemases family.

It carries out the reaction L-glutamate = D-glutamate. It participates in cell wall biogenesis; peptidoglycan biosynthesis. Provides the (R)-glutamate required for cell wall biosynthesis. The chain is Glutamate racemase from Pseudomonas aeruginosa (strain ATCC 15692 / DSM 22644 / CIP 104116 / JCM 14847 / LMG 12228 / 1C / PRS 101 / PAO1).